We begin with the raw amino-acid sequence, 1030 residues long: MKMADAKQKRNEQLKRWIGSETDLEPPVVKRQKTKVKFDDGAVFLAACSSGDTDEVLKLLHRGADINYANVDGLTALHQACIDDNVDMVKFLVENGANINQPDNEGWIPLHAAASCGYLDIAEFLIGQGAHVGAVNSEGDTPLDIAEEEAMEELLQNEVNRQGVDIEAARKEEERIMLRDARQWLNSGHINDVRHAKSGGTALHVAAAKGYTEVLKLLIQAGYDVNIKDYDGWTPLHAAAHWGKEEACRILVDNLCDMEMVNKVGQTAFDVADEDILGYLEELQKKQNLLHSEKRDKKSPLIESTANMDNNQSQKTFKNKETLIIEPEKNASRIESLEQEKVDEEEEGKKDESSCSSEEDEEDDSESEAETDKTKPLASVTNANTSSTQAAPVAVTTPTVSSGQATPTSPIKKFPTTATKISPKEEERKDESPATWRLGLRKTGSYGALAEITASKEGQKEKDTAGVTRSASSPRLSSSLDNKEKEKDSKGTRLAYVAPTIPRRLASTSDIEEKENRDSSSLRTSSSYTRRKWEDDLKKNSSVNEGSTYHKSCSFGRRQDDLISSSVPSTTSTPTVTSAAGLQKSLLSSTSTTTKITTGSSSAGTQSSTSNRLWAEDSTEKEKDSVPTAVTIPVAPTVVNAAASTTTLTTTTAGTVSSTTEVRERRRSYLTPVRDEESESQRKARSRQARQSRRSTQGVTLTDLQEAEKTIGRSRSTRTREQENEEKEKEEKEKQDKEKQEEKKESETSREDEYKQKYSRTYDETYQRYRPVSTSSSTTPSSSLSTMSSSLYASSQLNRPNSLVGITSAYSRGITKENEREGEKREEEKEGEDKSQPKSIRERRRPREKRRSTGVSFWTQDSDENEQEQQSDTEEGSNKKETQTDSISRYETSSTSAGDRYDSLLGRSGSYSYLEERKPYSSRLEKDDSTDFKKLYEQILAENEKLKAQLHDTNMELTDLKLQLEKATQRQERFADRSLLEMEKRERRALERRISEMEEELKMLPDLKADNQRLKDENGALIRVISKLSK.

The KVKF motif motif lies at 35-38 (KVKF). 6 ANK repeats span residues 39 to 68 (DDGA…DINY), 72 to 101 (DGLT…NINQ), 105 to 134 (EGWI…HVGA), 138 to 164 (EGDT…RQGV), 198 to 227 (SGGT…DVNI), and 231 to 260 (DGWT…DMEM). (3S)-3-hydroxyasparagine; by HIF1AN; partial occurs at positions 67 and 100. (3S)-3-hydroxyasparagine; by HIF1AN; partial is present on asparagine 226. Disordered stretches follow at residues 290–628 (LHSE…SVPT) and 643–928 (ASTT…EKDD). Over residues 291 to 300 (HSEKRDKKSP) the composition is skewed to basic and acidic residues. Serine 299 carries the post-translational modification Phosphoserine. Over residues 302–316 (IESTANMDNNQSQKT) the composition is skewed to polar residues. The span at 318–340 (KNKETLIIEPEKNASRIESLEQE) shows a compositional bias: basic and acidic residues. Acidic residues predominate over residues 357–369 (SEEDEEDDSESEA). The segment covering 385 to 402 (TSSTQAAPVAVTTPTVSS) has biased composition (low complexity). Residues serine 422 and serine 432 each carry the phosphoserine modification. Positions 422 to 432 (SPKEEERKDES) are enriched in basic and acidic residues. Phosphothreonine is present on threonine 443. Serine 445 is modified (phosphoserine; by NUAK1). Tyrosine 446 carries the post-translational modification Phosphotyrosine. Residues 469-480 (RSASSPRLSSSL) are compositionally biased toward low complexity. Serine 472 bears the Phosphoserine; by NUAK1 mark. A Phosphoserine; by CDK1 modification is found at serine 473. Position 477 is a phosphoserine (serine 477). The segment covering 481–491 (DNKEKEKDSKG) has biased composition (basic and acidic residues). Phosphoserine occurs at positions 507 and 509. Over residues 540 to 551 (NSSVNEGSTYHK) the composition is skewed to polar residues. The segment covering 564–610 (SSSVPSTTSTPTVTSAAGLQKSLLSSTSTTTKITTGSSSAGTQSSTS) has biased composition (low complexity). Phosphoserine is present on residues serine 601 and serine 618. Basic and acidic residues predominate over residues 614-625 (WAEDSTEKEKDS). Over residues 643-660 (ASTTTLTTTTAGTVSSTT) the composition is skewed to low complexity. Basic and acidic residues predominate over residues 673 to 682 (VRDEESESQR). The interaction with ROCK2 stretch occupies residues 682 to 864 (RKARSRQARQ…VSFWTQDSDE (183 aa)). Basic residues predominate over residues 683 to 693 (KARSRQARQSR). Serine 692 and serine 695 each carry phosphoserine; by PKA and PKG; in vitro. The residue at position 696 (threonine 696) is a Phosphothreonine; by ROCK1, ROCK2, CDC42BP, ZIPK/DAPK3 and RAF1. Over residues 718-767 (RTREQENEEKEKEEKEKQDKEKQEEKKESETSREDEYKQKYSRTYDETYQ) the composition is skewed to basic and acidic residues. The span at 773–795 (STSSSTTPSSSLSTMSSSLYASS) shows a compositional bias: low complexity. Polar residues predominate over residues 796 to 810 (QLNRPNSLVGITSAY). Serine 802 bears the Phosphoserine mark. Basic and acidic residues predominate over residues 814 to 840 (ITKENEREGEKREEEKEGEDKSQPKSI). The span at 841–852 (RERRRPREKRRS) shows a compositional bias: basic residues. At serine 852 the chain carries Phosphoserine; by ROCK2. A compositionally biased stretch (acidic residues) spans 861 to 875 (DSDENEQEQQSDTEE). Phosphoserine occurs at positions 862 and 871. Residues 884-897 (TDSISRYETSSTSA) show a composition bias toward polar residues. 2 positions are modified to phosphoserine: serine 903 and serine 908. Over residues 903–913 (SLLGRSGSYSY) the composition is skewed to low complexity. Serine 910 carries the phosphoserine; by NUAK1 modification. Over residues 914-928 (LEERKPYSSRLEKDD) the composition is skewed to basic and acidic residues. Serine 995 is subject to Phosphoserine.

PP1 comprises a catalytic subunit, PPP1CA, PPP1CB or PPP1CC, and one or several targeting or regulatory subunits. PPP1R12A mediates binding to myosin. Interacts with ARHA and CIT. Binds PPP1R12B, ROCK1 and IL16. Interacts directly with PRKG1. Non-covalent dimer of 2 dimers; PRKG1-PRKG1 and PPP1R12A-PPP1R12A. Interacts with SMTNL1. Interacts with PPP1CB; the interaction is direct. Interacts (when phosphorylated at Ser-445, Ser-472 and Ser-910) with 14-3-3. Interacts with ROCK1 and ROCK2. Interacts with isoform 1 and isoform 2 of ZIPK/DAPK3. Interacts with RAF1. Interacts with HIF1AN. Interacts with NCKAP1L. Phosphorylated by CIT (Rho-associated kinase). Phosphorylated cooperatively by ROCK1 and CDC42BP on Thr-696. Phosphorylated on upon DNA damage, probably by ATM or ATR. In vitro, phosphorylation of Ser-695 by PKA and PKG appears to prevent phosphorylation of the inhibitory site Thr-696, probably mediated by PRKG1. Phosphorylation at Ser-445, Ser-472 and Ser-910 by NUAK1 promotes interaction with 14-3-3, leading to inhibit interaction with myosin light chain MLC2, preventing dephosphorylation of MLC2. May be phosphorylated at Thr-696 by DMPK; may inhibit the myosin phosphatase activity. Phosphorylated at Ser-473 by CDK1 during mitosis, creating docking sites for the POLO box domains of PLK1. Subsequently, PLK1 binds and phosphorylates PPP1R12A. Expressed in striated muscles, specifically in type 2a fibers (at protein level).

The protein localises to the cytoplasm. It localises to the cytoskeleton. It is found in the stress fiber. Key regulator of protein phosphatase 1C (PPP1C). Mediates binding to myosin. As part of the PPP1C complex, involved in dephosphorylation of PLK1. Capable of inhibiting HIF1AN-dependent suppression of HIF1A activity. The sequence is that of Protein phosphatase 1 regulatory subunit 12A from Homo sapiens (Human).